Reading from the N-terminus, the 314-residue chain is Peroxidase 2 (314 aa).

Residues 1 to 23 (MASASSVSLMLLVAAAMASAASA) form the signal peptide. Position 24 is a pyrrolidone carboxylic acid (Gln-24). Cystine bridges form between Cys-34–Cys-109, Cys-67–Cys-72, Cys-115–Cys-310, and Cys-194–Cys-219. His-65 functions as the Proton acceptor in the catalytic mechanism. Residues Asp-66, Val-69, Gly-71, Asp-73, and Ser-75 each contribute to the Ca(2+) site. A glycan (N-linked (GlcNAc...) asparagine) is linked at Asn-148. Pro-157 is a binding site for substrate. Asn-169 is a glycosylation site (N-linked (GlcNAc...) asparagine). Position 187 (His-187) interacts with heme b. Residue Thr-188 coordinates Ca(2+). Asn-203 is a glycosylation site (N-linked (GlcNAc...) asparagine). Ca(2+) contacts are provided by Asp-234, Thr-237, and Asp-242. Asn-274 and Asn-309 each carry an N-linked (GlcNAc...) asparagine glycan.

It belongs to the peroxidase family. Classical plant (class III) peroxidase subfamily. Requires Ca(2+) as cofactor. The cofactor is heme b.

The protein localises to the secreted. The catalysed reaction is 2 a phenolic donor + H2O2 = 2 a phenolic radical donor + 2 H2O. Functionally, removal of H(2)O(2), oxidation of toxic reductants, biosynthesis and degradation of lignin, suberization, auxin catabolism, response to environmental stresses such as wounding, pathogen attack and oxidative stress. These functions might be dependent on each isozyme/isoform in each plant tissue. This Oryza sativa subsp. japonica (Rice) protein is Peroxidase 2 (PRX112).